A 303-amino-acid chain; its full sequence is Ferrochelatase (303 aa).

The Fe cation site is built by histidine 185 and glutamate 262.

Belongs to the ferrochelatase family.

It localises to the cytoplasm. It catalyses the reaction heme b + 2 H(+) = protoporphyrin IX + Fe(2+). Its pathway is porphyrin-containing compound metabolism; protoheme biosynthesis; protoheme from protoporphyrin-IX: step 1/1. Its function is as follows. Catalyzes the ferrous insertion into protoporphyrin IX. The protein is Ferrochelatase of Campylobacter jejuni subsp. doylei (strain ATCC BAA-1458 / RM4099 / 269.97).